The primary structure comprises 288 residues: MNLKLASSPHELRTCLAGRAFVLVPTMGALHEGHIWLVDMARRCNLPVVVSIFVNPLQFDDSLDLDTYPRTLEQDLEKLEGKAFAVYSPSVETMYPNGLDSIRIDPGPIGRILEGAIRPGFFDGILTIVAKLLLQTAPERVFFSKKDAQQAFLVRRMVRELAFPVRVEVTGFLRDKFSLPYSSRNRKLGVDAREKAQRLSQGLLSVVNNGPLTVRDCIDKITDLANSIGVDLGYAQILDENFCEIASDRMVTRAFHSEACIGLNTPLFLLAARVHGVRVVDNVDLVVV.

Residue 27-34 (MGALHEGH) coordinates ATP. Residue H34 is the Proton donor of the active site. 2 residues coordinate (R)-pantoate: Q58 and Q150. Residue Q58 coordinates beta-alanine. ATP-binding positions include L173 and 181–184 (YSSR).

Belongs to the pantothenate synthetase family. In terms of assembly, homodimer.

The protein localises to the cytoplasm. It catalyses the reaction (R)-pantoate + beta-alanine + ATP = (R)-pantothenate + AMP + diphosphate + H(+). The protein operates within cofactor biosynthesis; (R)-pantothenate biosynthesis; (R)-pantothenate from (R)-pantoate and beta-alanine: step 1/1. Functionally, catalyzes the condensation of pantoate with beta-alanine in an ATP-dependent reaction via a pantoyl-adenylate intermediate. This Tropheryma whipplei (strain TW08/27) (Whipple's bacillus) protein is Pantothenate synthetase.